We begin with the raw amino-acid sequence, 494 residues long: V-type proton ATPase subunit B (494 aa).

Residue Arg384 coordinates ATP.

Belongs to the ATPase alpha/beta chains family. As to quaternary structure, V-ATPase is a heteromultimeric enzyme made up of two complexes: the ATP-hydrolytic V1 complex and the proton translocation V0 complex. The V1 complex consists of three catalytic AB heterodimers that form a heterohexamer, three peripheral stalks each consisting of EG heterodimers, one central rotor including subunits D and F, and the regulatory subunits C and H. The proton translocation complex V0 consists of the proton transport subunit a, a ring of proteolipid subunits c9c'', rotary subunit d, subunits e and f, and the accessory subunits VhaAC45 and ATP6AP2.

Its function is as follows. Non-catalytic subunit of the V1 complex of vacuolar(H+)-ATPase (V-ATPase), a multisubunit enzyme composed of a peripheral complex (V1) that hydrolyzes ATP and a membrane integral complex (V0) that translocates protons. V-ATPase is responsible for acidifying and maintaining the pH of intracellular compartments and in some cell types, is targeted to the plasma membrane, where it is responsible for acidifying the extracellular environment. Essential for the proper assembly and activity of V-ATPase. This Manduca sexta (Tobacco hawkmoth) protein is V-type proton ATPase subunit B (VHA55).